We begin with the raw amino-acid sequence, 265 residues long: ATP synthase subunit a (265 aa).

6 helical membrane-spanning segments follow: residues 26–46, 88–108, 132–152, 168–188, 195–217, and 231–251; these read VHLD…FFFY, IGSL…IDLI, DISA…FYTI, PFNH…TLLA, FRLF…MYMA, and LIWA…FMML.

Belongs to the ATPase A chain family. As to quaternary structure, F-type ATPases have 2 components, CF(1) - the catalytic core - and CF(0) - the membrane proton channel. CF(1) has five subunits: alpha(3), beta(3), gamma(1), delta(1), epsilon(1). CF(0) has three main subunits: a(1), b(2) and c(9-12). The alpha and beta chains form an alternating ring which encloses part of the gamma chain. CF(1) is attached to CF(0) by a central stalk formed by the gamma and epsilon chains, while a peripheral stalk is formed by the delta and b chains.

It localises to the cell inner membrane. Key component of the proton channel; it plays a direct role in the translocation of protons across the membrane. The protein is ATP synthase subunit a of Histophilus somni (strain 2336) (Haemophilus somnus).